A 236-amino-acid polypeptide reads, in one-letter code: Putative N-acetylmannosamine-6-phosphate 2-epimerase (236 aa).

The protein belongs to the NanE family.

The catalysed reaction is an N-acyl-D-glucosamine 6-phosphate = an N-acyl-D-mannosamine 6-phosphate. The protein operates within amino-sugar metabolism; N-acetylneuraminate degradation; D-fructose 6-phosphate from N-acetylneuraminate: step 3/5. Its function is as follows. Converts N-acetylmannosamine-6-phosphate (ManNAc-6-P) to N-acetylglucosamine-6-phosphate (GlcNAc-6-P). The polypeptide is Putative N-acetylmannosamine-6-phosphate 2-epimerase (Listeria welshimeri serovar 6b (strain ATCC 35897 / DSM 20650 / CCUG 15529 / CIP 8149 / NCTC 11857 / SLCC 5334 / V8)).